Reading from the N-terminus, the 106-residue chain is Iron-sulfur cluster assembly protein CyaY (106 aa).

Belongs to the frataxin family.

Involved in iron-sulfur (Fe-S) cluster assembly. May act as a regulator of Fe-S biogenesis. This chain is Iron-sulfur cluster assembly protein CyaY, found in Citrobacter koseri (strain ATCC BAA-895 / CDC 4225-83 / SGSC4696).